The sequence spans 584 residues: Extracellular serine/threonine protein kinase FAM20C (584 aa).

Residues 1 to 10 (MKMMLVRRFR) are Cytoplasmic-facing. Residues 1–92 (MKMMLVRRFR…PNKHTLRILQ (92 aa)) constitute a propeptide that is removed on maturation. The chain crosses the membrane as a helical; Signal-anchor for type II membrane protein span at residues 11–31 (VLILMVFLVACALHIALDLLP). Over 32-584 (RLERRGARPS…DTEHRAASAR (553 aa)) the chain is Lumenal. Disordered stretches follow at residues 62-81 (QVRGRPGEPPAASSAAGDAG) and 94-159 (FSSD…GDAS). Low complexity-rich tracts occupy residues 71 to 81 (PAASSAAGDAG) and 95 to 112 (SSDPSSNLSSHSLEKLPP). Asparagine 101 is a glycosylation site (N-linked (GlcNAc...) asparagine). Serine 106 bears the Phosphoserine mark. A compositionally biased stretch (basic and acidic residues) spans 116-149 (PAERALRGRDPGALRPHDPAHRPLLRDPGPRRSE). The ATP site is built by glutamine 269, lysine 285, and glutamate 306. Glutamate 306 contributes to the Mn(2+) binding site. Asparagine 335 carries an N-linked (GlcNAc...) asparagine glycan. A kinase domain region spans residues 354 to 565 (FISPANNICF…AVRDCVERNG (212 aa)). 2 cysteine pairs are disulfide-bonded: cysteine 362–cysteine 378 and cysteine 367–cysteine 371. 389-392 (AAFL) lines the ATP pocket. 2 disulfides stabilise this stretch: cysteine 426–cysteine 500 and cysteine 501–cysteine 560. Residue aspartate 458 is part of the active site. Glutamate 463 is an ATP binding site. Asparagine 470 carries N-linked (GlcNAc...) asparagine glycosylation. Aspartate 478 lines the ATP pocket. Position 478 (aspartate 478) interacts with Mn(2+).

The protein belongs to the FAM20 family. As to quaternary structure, homodimer; disulfide-linked. Interacts with FAM20A; probably forming a heterotetramer of 2 subunits of FAM20A and 2 subunits of FAM20C. Interacts with protease MBTPS1/S1P; the interaction results in FAM20C cleavage and secretion. Interacts with COPII components SEC23A and SEC24A; transport of FAM20C from the endoplasmic reticulum to the Golgi is likely to be mediated by COPII vesicles. Mn(2+) serves as cofactor. N-glycosylation is required for folding. Post-translationally, autophosphorylated. In terms of processing, propeptide cleavage by MBTPS1/S1P promotes FAM20C secretion and maximal kinase activity which is essential for efficient osteoblast differentiation and biomineralization. Widely expressed.

The protein resides in the golgi apparatus membrane. Its subcellular location is the secreted. It localises to the endoplasmic reticulum. It catalyses the reaction L-seryl-[protein] + ATP = O-phospho-L-seryl-[protein] + ADP + H(+). The catalysed reaction is L-threonyl-[protein] + ATP = O-phospho-L-threonyl-[protein] + ADP + H(+). Serine/threonine protein kinase activity is increased upon interaction with FAM20A. Golgi serine/threonine protein kinase that phosphorylates secretory pathway proteins within Ser-x-Glu/pSer motifs and plays a key role in biomineralization of bones and teeth. Constitutes the main protein kinase for extracellular proteins, generating the majority of the extracellular phosphoproteome. Mainly phosphorylates proteins within the Ser-x-Glu/pSer motif, but also displays a broader substrate specificity. Phosphorylates ERO1A, enhancing its activity which is required to maintain endoplasmic reticulum redox homeostasis and for oxidative protein folding. During endoplasmic reticulum stress, phosphorylates P4HB/PDIA1 which induces a functional switch, causing P4HB to change from an oxidoreductase to a molecular chaperone. This is critical to maintain ER proteostasis and reduce cell death under ER stress. Phosphorylation of P4HB also promotes its interaction with ERN1, leading to reduced activity of ERN1, a key sensor for the endoplasmic reticulum unfolded protein response. Required for osteoblast differentiation and mineralization. Phosphorylates casein as well as a number of proteins involved in biomineralization such as AMELX, AMTN, ENAM and SPP1/OPN. In addition to its role in biomineralization, also plays a role in lipid homeostasis, wound healing and cell migration and adhesion. The polypeptide is Extracellular serine/threonine protein kinase FAM20C (Homo sapiens (Human)).